The sequence spans 639 residues: MKIINIGILAHVDAGKTTLTESLLYASGAISEPGSVEKGTTRTDTMFLERQRGITIQAAVTSFQWHRCKVNIVDTPGHMDFLAEVYRSLAVLDGAILVISAKDGVQAQTRILFHALRKMNIPTVIFINKIDQAGVDLQSVVQSVRDKLSADIIIKQTVSLSPEIVLEENTDIEAWDAVIENNDELLEKYIAGEPISREKLAREEQQRVQDASLFPVYHGSAKNGLGIQPLMDAVTGLFQPIGEQGGAALCGSVFKVEYTDCGQRRVYLRLYSGTLRLRDTVALAGREKLKITEMRIPSKGEIVRTDTAYQGEIVILPSDSVRLNDVLGDQTRLPRKRWREDPLPMLRTTIAPKTAAQRERLLDALTQLADTDPLLRCEVDSITHEIILSFLGRVQLEVVSALLSEKYKLETVVKEPSVIYMERPLKAASHTIHIEVPPNPFWASIGLSVTPLSLGSGVQYESRVSLGYLNQSFQNAVRDGIRYGLEQGLFGWNVTDCKICFEYGLYYSPVSTPADFRSLAPIVLEQALKESGTQLLEPYLSFILYAPQEYLSRAYHDAPKYCATIETAQVKKDEVVFTGEIPARCIQAYRTDLAFYTNGRSVCLTELKGYQAAVGQPVIQPRRPNSRLDKVRHMFQKVM.

The tr-type G domain occupies 1 to 243 (MKIINIGILA…VTGLFQPIGE (243 aa)). Residues 10–17 (AHVDAGKT), 74–78 (DTPGH), and 128–131 (NKID) each bind GTP.

The protein belongs to the TRAFAC class translation factor GTPase superfamily. Classic translation factor GTPase family. TetM/TetO subfamily.

Its function is as follows. Abolishes the inhibitory effect of tetracyclin on protein synthesis by a non-covalent modification of the ribosomes. The sequence is that of Tetracycline resistance protein TetW (tetW) from Butyrivibrio fibrisolvens.